Reading from the N-terminus, the 508-residue chain is MWELVALLLLTLAYLFWPKRRCPGAKYPKSLLSLPLVGSLPFLPRHGHMHNNFFKLQKKYGPIYSVRMGTKTTVIVGHHQLAKEVLIKKGKDFSGRPQMATLDIASNNRKGIAFADSGAHWQLHRRLAMATFALFKDGDQKLEKIICQEISTLCDMLATHNGQSIDISFPVFVAVTNVISLICFNTSYKNGDPELNIIQNYNEGIIDNLSKDSLVDLVPWLKIFPNKTLEKLKSHVKIRNDLLNKILENYKEKFRSDSITNMLDTLMQAKMNSDNGNAGPDQDSELLSDNHILTTIGDIFGAGVETTTSVVKWTLAFLLHNPQVKKKLYEEIDQNVGFSRTPTISDRNRLLLLEATIREVLRLRPVAPMLIPHKANVDSSIGEFAVDKGTQVIINLWALHHNEKEWHQPDQFMPERFLNPAGTQLISPSVSYLPFGAGPRSCIGEILARQELFLIMAWLLQRFDLEVPDDGQLPSLEGIPKVVFLIDSFKVKIKVRQAWREAQAEGST.

Asn-202 contacts substrate. Cys-442 contacts heme.

The protein belongs to the cytochrome P450 family. Heme is required as a cofactor.

The protein localises to the endoplasmic reticulum membrane. The protein resides in the microsome membrane. It catalyses the reaction a C21-steroid + reduced [NADPH--hemoprotein reductase] + O2 = a 17alpha-hydroxy-C21-steroid + oxidized [NADPH--hemoprotein reductase] + H2O + H(+). The enzyme catalyses progesterone + reduced [NADPH--hemoprotein reductase] + O2 = 17alpha-hydroxyprogesterone + oxidized [NADPH--hemoprotein reductase] + H2O + H(+). The catalysed reaction is pregnenolone + reduced [NADPH--hemoprotein reductase] + O2 = 17alpha-hydroxypregnenolone + oxidized [NADPH--hemoprotein reductase] + H2O + H(+). It carries out the reaction 17alpha-hydroxyprogesterone + reduced [NADPH--hemoprotein reductase] + O2 = androst-4-ene-3,17-dione + acetate + oxidized [NADPH--hemoprotein reductase] + H2O + 2 H(+). It catalyses the reaction 17alpha-hydroxyprogesterone + reduced [NADPH--hemoprotein reductase] + O2 = 16alpha,17alpha-dihydroxyprogesterone + oxidized [NADPH--hemoprotein reductase] + H2O + H(+). The enzyme catalyses 16alpha,17alpha-dihydroxyprogesterone + reduced [NADPH--hemoprotein reductase] + O2 = 6beta,16alpha,17alpha-trihydroxyprogesterone + oxidized [NADPH--hemoprotein reductase] + H2O + H(+). The catalysed reaction is 17alpha-hydroxypregnenolone + reduced [NADPH--hemoprotein reductase] + O2 = 3beta-hydroxyandrost-5-en-17-one + acetate + oxidized [NADPH--hemoprotein reductase] + H2O + 2 H(+). It carries out the reaction 16alpha,17alpha-dihydroxypregnenolone + reduced [NADPH--hemoprotein reductase] + O2 = 3beta,16alpha-dihydroxy-androst-5-en-17-one + acetate + oxidized [NADPH--hemoprotein reductase] + H2O + 2 H(+). It catalyses the reaction 3beta-hydroxyandrost-5-en-17-one + reduced [NADPH--hemoprotein reductase] + O2 = 3beta,16alpha-dihydroxy-androst-5-en-17-one + oxidized [NADPH--hemoprotein reductase] + H2O + H(+). The enzyme catalyses androst-4-ene-3,17-dione + reduced [NADPH--hemoprotein reductase] + O2 = 16alpha-hydroxyandrost-4-ene-3,17-dione + oxidized [NADPH--hemoprotein reductase] + H2O + H(+). It functions in the pathway steroid hormone biosynthesis. Its pathway is steroid biosynthesis; glucocorticoid biosynthesis. Regulated predominantly by intracellular cAMP levels. The 17,20-lyase activity is stimulated by cytochrome b5, which acts as an allosteric effector increasing the Vmax of the lyase activity. In terms of biological role, a cytochrome P450 monooxygenase involved in corticoid and androgen biosynthesis. Catalyzes 17-alpha hydroxylation of C21 steroids, which is common for both pathways. A second oxidative step, required only for androgen synthesis, involves an acyl-carbon cleavage. The 17-alpha hydroxy intermediates, as part of adrenal glucocorticoids biosynthesis pathway, are precursors of cortisol. Hydroxylates steroid hormones, pregnenolone and progesterone to form 17-alpha hydroxy metabolites, followed by the cleavage of the C17-C20 bond to form C19 steroids, dehydroepiandrosterone (DHEA) and androstenedione. Has 16-alpha hydroxylase activity. Catalyzes 16-alpha hydroxylation of 17-alpha hydroxy pregnenolone, followed by the cleavage of the C17-C20 bond to form 16-alpha-hydroxy DHEA. Also 16-alpha hydroxylates androgens, relevant for estriol synthesis. Mechanistically, uses molecular oxygen inserting one oxygen atom into a substrate, and reducing the second into a water molecule, with two electrons provided by NADPH via cytochrome P450 reductase (CPR; NADPH-ferrihemoprotein reductase). The protein is Steroid 17-alpha-hydroxylase/17,20 lyase (CYP17A1) of Pan troglodytes (Chimpanzee).